The chain runs to 127 residues: Aspartate 1-decarboxylase (127 aa).

S25 serves as the catalytic Schiff-base intermediate with substrate; via pyruvic acid. The residue at position 25 (S25) is a Pyruvic acid (Ser). T57 serves as a coordination point for substrate. Y58 (proton donor) is an active-site residue. 73–75 (GAA) contacts substrate.

This sequence belongs to the PanD family. In terms of assembly, heterooctamer of four alpha and four beta subunits. The cofactor is pyruvate. Is synthesized initially as an inactive proenzyme, which is activated by self-cleavage at a specific serine bond to produce a beta-subunit with a hydroxyl group at its C-terminus and an alpha-subunit with a pyruvoyl group at its N-terminus.

The protein resides in the cytoplasm. The catalysed reaction is L-aspartate + H(+) = beta-alanine + CO2. The protein operates within cofactor biosynthesis; (R)-pantothenate biosynthesis; beta-alanine from L-aspartate: step 1/1. In terms of biological role, catalyzes the pyruvoyl-dependent decarboxylation of aspartate to produce beta-alanine. The polypeptide is Aspartate 1-decarboxylase (Trichormus variabilis (strain ATCC 29413 / PCC 7937) (Anabaena variabilis)).